The primary structure comprises 420 residues: MSGRPRTTSFAESCKPVQQPSAFGSMKVSRDKDGSKVTTVVATPGQGPDRPQEVSYTDTKVIGNGSFGVVYQAKLCDSGELVAIKKVLQDKRFKNRELQIMRKLDHCNIVRLRYFFYSSGEKKDEVYLNLVLDYVPETVYRVARHYSRAKQTLPVIYVKLYMYQLFRSLAYIHSFGICHRDIKPQNLLLDPDTAVLKLCDFGSAKQLVRGEPNVSYICSRYYRAPELIFGATDYTSSIDVWSAGCVLAELLLGQPIFPGDSGVDQLVEIIKVLGTPTREQIREMNPNYTEFKFPQIKAHPWTKVFRPRTPPEAIALCSRLLEYTPTARLTPLEACAHSFFDELRDPNVKLPNGRDTPALFNFTTQELSSNPPLATILIPPHARIQAAASTPTNATAASDANTGDRGQTNNAASASASNST.

Over residues 1 to 22 (MSGRPRTTSFAESCKPVQQPSA) the composition is skewed to polar residues. The disordered stretch occupies residues 1 to 53 (MSGRPRTTSFAESCKPVQQPSAFGSMKVSRDKDGSKVTTVVATPGQGPDRPQE). Position 9 is a phosphoserine; by PKB/AKT1, RPS6KA3 and SGK3 (serine 9). Residue cysteine 14 is the site of S-palmitoyl cysteine attachment. Residues 56–340 (YTDTKVIGNG…PLEACAHSFF (285 aa)) enclose the Protein kinase domain. Residues 62–70 (IGNGSFGVV) and lysine 85 each bind ATP. The active-site Proton acceptor is aspartate 181. Tyrosine 216 is modified (phosphotyrosine). Residues 386 to 401 (AAASTPTNATAASDAN) show a composition bias toward low complexity. Positions 386 to 420 (AAASTPTNATAASDANTGDRGQTNNAASASASNST) are disordered. Position 389 is a phosphoserine (serine 389). A phosphothreonine mark is found at threonine 390 and threonine 402. The segment covering 409 to 420 (NNAASASASNST) has biased composition (low complexity).

It belongs to the protein kinase superfamily. CMGC Ser/Thr protein kinase family. GSK-3 subfamily. As to quaternary structure, monomer. Interacts with ARRB2, DISC1 and ZBED3. Interacts with CABYR, MMP2, MUC1, NIN and PRUNE1. Interacts with AXIN1; the interaction mediates hyperphosphorylation of CTNNB1 leading to its ubiquitination and destruction. Interacts with and phosphorylates SNAI1. Interacts with DNM1L (via a C-terminal domain). Found in a complex composed of MACF1, APC, AXIN1, CTNNB1 and GSK3B. Interacts with SGK3. Interacts with DAB2IP (via C2 domain); the interaction stimulates GSK3B kinase activation. Interacts (via C2 domain) with PPP2CA. Interacts with the CLOCK-BMAL1 heterodimer. Interacts with the BMAL1. Interacts with CTNND2. Interacts with NCYM. The complex composed, at least, of APC, CTNNB1 and GSK3B interacts with JPT1; the interaction requires the inactive form of GSK3B (phosphorylated at 'Ser-9'). Forms a complex composed of PRKAR2A or PRKAR2B, GSK3B and GSKIP through GSKIP interaction; facilitates PKA-induced phosphorylation and regulates GSK3B activity. Interacts with GSKIP. Interacts with GID8. Interacts with PIWIL2. Interacts with LMBR1L. Interacts with DDX3X. Interacts with BIRC2. Interacts with TNFRSF10B; TNFRSF10B stimulation inhibits GSK3B kinase activity. Interacts with RICTOR; the interaction results in phosphorylation of RICTOR at 'Thr-1695' by GSK3B which facilitates FBXW7-mediated ubiquitination and subsequent degradation of RICTOR. Found in a complex with SLC39A6, SLC39A10 and with GSK3B that controls NCAM1 phosphorylation. Interacts with PKP3 (via ARM repeats); the interaction may be involved in PKP3 protein degradation. In terms of processing, phosphorylated by AKT1 and ILK1. Upon insulin-mediated signaling, the activated PKB/AKT1 protein kinase phosphorylates and deactivates GSK3B, resulting in the dephosphorylation and activation of GYS1. Activated by phosphorylation at Tyr-216. Inactivated by phosphorylation at Ser-9. Phosphorylated in a circadian manner in the hippocampus. Post-translationally, mono-ADP-ribosylation by PARP10 negatively regulates kinase activity. Palmitoylated. Palmitoylation by ZDHHC4 prevents AKT1-mediated phosphorylation. In terms of tissue distribution, expressed in testis, thymus, prostate and ovary and weakly expressed in lung, brain and kidney. Colocalizes with EIF2AK2/PKR and TAU in the Alzheimer disease (AD) brain.

It localises to the cytoplasm. The protein resides in the nucleus. The protein localises to the cell membrane. It catalyses the reaction L-seryl-[tau protein] + ATP = O-phospho-L-seryl-[tau protein] + ADP + H(+). The enzyme catalyses L-threonyl-[tau protein] + ATP = O-phospho-L-threonyl-[tau protein] + ADP + H(+). It carries out the reaction L-seryl-[protein] + ATP = O-phospho-L-seryl-[protein] + ADP + H(+). The catalysed reaction is L-threonyl-[protein] + ATP = O-phospho-L-threonyl-[protein] + ADP + H(+). Activated by phosphorylation at Tyr-216. In response to insulin, inhibited by phosphorylation at Ser-9 by PKB/AKT1 and RPS6KA3; phosphorylation at this site causes a conformational change, preventing access of substrates to the active site. Inhibited by IL22 treatment which also triggers phosphorylation at Ser-9, promoting inactivation. Inhibited by lithium. Constitutively active protein kinase that acts as a negative regulator in the hormonal control of glucose homeostasis, Wnt signaling and regulation of transcription factors and microtubules, by phosphorylating and inactivating glycogen synthase (GYS1 or GYS2), EIF2B, CTNNB1/beta-catenin, APC, AXIN1, DPYSL2/CRMP2, JUN, NFATC1/NFATC, MAPT/TAU and MACF1. Requires primed phosphorylation of the majority of its substrates. In skeletal muscle, contributes to insulin regulation of glycogen synthesis by phosphorylating and inhibiting GYS1 activity and hence glycogen synthesis. May also mediate the development of insulin resistance by regulating activation of transcription factors. Regulates protein synthesis by controlling the activity of initiation factor 2B (EIF2BE/EIF2B5) in the same manner as glycogen synthase. In Wnt signaling, GSK3B forms a multimeric complex with APC, AXIN1 and CTNNB1/beta-catenin and phosphorylates the N-terminus of CTNNB1 leading to its degradation mediated by ubiquitin/proteasomes. Phosphorylates JUN at sites proximal to its DNA-binding domain, thereby reducing its affinity for DNA. Phosphorylates NFATC1/NFATC on conserved serine residues promoting NFATC1/NFATC nuclear export, shutting off NFATC1/NFATC gene regulation, and thereby opposing the action of calcineurin. Phosphorylates MAPT/TAU on 'Thr-548', decreasing significantly MAPT/TAU ability to bind and stabilize microtubules. MAPT/TAU is the principal component of neurofibrillary tangles in Alzheimer disease. Plays an important role in ERBB2-dependent stabilization of microtubules at the cell cortex. Phosphorylates MACF1, inhibiting its binding to microtubules which is critical for its role in bulge stem cell migration and skin wound repair. Probably regulates NF-kappa-B (NFKB1) at the transcriptional level and is required for the NF-kappa-B-mediated anti-apoptotic response to TNF-alpha (TNF/TNFA). Negatively regulates replication in pancreatic beta-cells, resulting in apoptosis, loss of beta-cells and diabetes. Through phosphorylation of the anti-apoptotic protein MCL1, may control cell apoptosis in response to growth factors deprivation. Phosphorylates MUC1 in breast cancer cells, decreasing the interaction of MUC1 with CTNNB1/beta-catenin. Is necessary for the establishment of neuronal polarity and axon outgrowth. Phosphorylates MARK2, leading to inhibition of its activity. Phosphorylates SIK1 at 'Thr-182', leading to sustainment of its activity. Phosphorylates ZC3HAV1 which enhances its antiviral activity. Phosphorylates SNAI1, leading to its ubiquitination and proteasomal degradation. Phosphorylates SFPQ at 'Thr-687' upon T-cell activation. Phosphorylates NR1D1 st 'Ser-55' and 'Ser-59' and stabilizes it by protecting it from proteasomal degradation. Regulates the circadian clock via phosphorylation of the major clock components including BMAL1, CLOCK and PER2. Phosphorylates FBXL2 at 'Thr-404' and primes it for ubiquitination by the SCF(FBXO3) complex and proteasomal degradation. Phosphorylates CLOCK AT 'Ser-427' and targets it for proteasomal degradation. Phosphorylates BMAL1 at 'Ser-17' and 'Ser-21' and primes it for ubiquitination and proteasomal degradation. Phosphorylates OGT at 'Ser-3' or 'Ser-4' which positively regulates its activity. Phosphorylates MYCN in neuroblastoma cells which may promote its degradation. Regulates the circadian rhythmicity of hippocampal long-term potentiation and BMAL1 and PER2 expression. Acts as a regulator of autophagy by mediating phosphorylation of KAT5/TIP60 under starvation conditions, activating KAT5/TIP60 acetyltransferase activity and promoting acetylation of key autophagy regulators, such as ULK1 and RUBCNL/Pacer. Negatively regulates extrinsic apoptotic signaling pathway via death domain receptors. Promotes the formation of an anti-apoptotic complex, made of DDX3X, BRIC2 and GSK3B, at death receptors, including TNFRSF10B. The anti-apoptotic function is most effective with weak apoptotic signals and can be overcome by stronger stimulation. Phosphorylates E2F1, promoting the interaction between E2F1 and USP11, stabilizing E2F1 and promoting its activity. Phosphorylates mTORC2 complex component RICTOR at 'Ser-1235' in response to endoplasmic stress, inhibiting mTORC2. Phosphorylates mTORC2 complex component RICTOR at 'Thr-1695' which facilitates FBXW7-mediated ubiquitination and subsequent degradation of RICTOR. Phosphorylates FXR1, promoting FXR1 ubiquitination by the SCF(FBXO4) complex and FXR1 degradation by the proteasome. Phosphorylates interleukin-22 receptor subunit IL22RA1, preventing its proteasomal degradation. This chain is Glycogen synthase kinase-3 beta, found in Homo sapiens (Human).